A 128-amino-acid chain; its full sequence is Leucine-rich single-pass membrane protein 1 (128 aa).

Serine 24 carries the post-translational modification Phosphoserine. A helical transmembrane segment spans residues 66–86 (GLLLVLTVSLALVFFAIFLII). Residues 90-111 (NQMEDVSRRLTAEGKDIDDLKK) adopt a coiled-coil conformation.

It localises to the membrane. The polypeptide is Leucine-rich single-pass membrane protein 1 (Lsmem1) (Mus musculus (Mouse)).